The following is a 646-amino-acid chain: Chaperone protein DnaK (646 aa).

Phosphothreonine; by autocatalysis is present on Thr198. The tract at residues 603-646 (EQAQQAGGAEGFDPNAFQGGDAGQQKADDGVVDAEFTEVKDDKK) is disordered. Residues 618 to 627 (AFQGGDAGQQ) show a composition bias toward low complexity.

It belongs to the heat shock protein 70 family.

Its function is as follows. Acts as a chaperone. The protein is Chaperone protein DnaK of Acinetobacter baumannii (strain AB307-0294).